Here is a 203-residue protein sequence, read N- to C-terminus: dITP/XTP pyrophosphatase (203 aa).

Substrate is bound at residue 16 to 21; sequence SHNRGK. Mg(2+)-binding residues include glutamate 48 and aspartate 77. The Proton acceptor role is filled by aspartate 77. Substrate is bound by residues serine 78, 161–164, lysine 184, and 189–190; these read FGYD and HR.

The protein belongs to the HAM1 NTPase family. Homodimer. It depends on Mg(2+) as a cofactor.

The enzyme catalyses XTP + H2O = XMP + diphosphate + H(+). It carries out the reaction dITP + H2O = dIMP + diphosphate + H(+). It catalyses the reaction ITP + H2O = IMP + diphosphate + H(+). Functionally, pyrophosphatase that catalyzes the hydrolysis of nucleoside triphosphates to their monophosphate derivatives, with a high preference for the non-canonical purine nucleotides XTP (xanthosine triphosphate), dITP (deoxyinosine triphosphate) and ITP. Seems to function as a house-cleaning enzyme that removes non-canonical purine nucleotides from the nucleotide pool, thus preventing their incorporation into DNA/RNA and avoiding chromosomal lesions. The polypeptide is dITP/XTP pyrophosphatase (Rhodospirillum centenum (strain ATCC 51521 / SW)).